A 974-amino-acid chain; its full sequence is Glycine dehydrogenase (decarboxylating) (974 aa).

The residue at position 720 (Lys720) is an N6-(pyridoxal phosphate)lysine.

It belongs to the GcvP family. In terms of assembly, the glycine cleavage system is composed of four proteins: P, T, L and H. Pyridoxal 5'-phosphate is required as a cofactor.

The catalysed reaction is N(6)-[(R)-lipoyl]-L-lysyl-[glycine-cleavage complex H protein] + glycine + H(+) = N(6)-[(R)-S(8)-aminomethyldihydrolipoyl]-L-lysyl-[glycine-cleavage complex H protein] + CO2. Functionally, the glycine cleavage system catalyzes the degradation of glycine. The P protein binds the alpha-amino group of glycine through its pyridoxal phosphate cofactor; CO(2) is released and the remaining methylamine moiety is then transferred to the lipoamide cofactor of the H protein. The sequence is that of Glycine dehydrogenase (decarboxylating) from Cupriavidus metallidurans (strain ATCC 43123 / DSM 2839 / NBRC 102507 / CH34) (Ralstonia metallidurans).